A 123-amino-acid chain; its full sequence is Small ribosomal subunit protein uS12 (123 aa).

D89 carries the post-translational modification 3-methylthioaspartic acid.

The protein belongs to the universal ribosomal protein uS12 family. Part of the 30S ribosomal subunit. Contacts proteins S8 and S17. May interact with IF1 in the 30S initiation complex.

With S4 and S5 plays an important role in translational accuracy. Its function is as follows. Interacts with and stabilizes bases of the 16S rRNA that are involved in tRNA selection in the A site and with the mRNA backbone. Located at the interface of the 30S and 50S subunits, it traverses the body of the 30S subunit contacting proteins on the other side and probably holding the rRNA structure together. The combined cluster of proteins S8, S12 and S17 appears to hold together the shoulder and platform of the 30S subunit. This is Small ribosomal subunit protein uS12 from Caulobacter sp. (strain K31).